The primary structure comprises 83 residues: Exodeoxyribonuclease 7 small subunit (83 aa).

Positions 63 to 83 (VQNDDGTTGTEPLADTGESGR) are disordered.

The protein belongs to the XseB family. In terms of assembly, heterooligomer composed of large and small subunits.

It is found in the cytoplasm. It catalyses the reaction Exonucleolytic cleavage in either 5'- to 3'- or 3'- to 5'-direction to yield nucleoside 5'-phosphates.. Its function is as follows. Bidirectionally degrades single-stranded DNA into large acid-insoluble oligonucleotides, which are then degraded further into small acid-soluble oligonucleotides. The protein is Exodeoxyribonuclease 7 small subunit of Gluconobacter oxydans (strain 621H) (Gluconobacter suboxydans).